The sequence spans 407 residues: Na(+)-translocating NADH-quinone reductase subunit F (407 aa).

Residues 3–23 (IILGVVMFTLIVLALTVMILF) traverse the membrane as a helical segment. A 2Fe-2S ferredoxin-type domain is found at 32–126 (GDITVEINED…NLKIELPEEI (95 aa)). [2Fe-2S] cluster contacts are provided by Cys69, Cys75, Cys78, and Cys110. The FAD-binding FR-type domain occupies 129–269 (VKKWTCEVIS…SGPFGEFFAK (141 aa)).

Belongs to the NqrF family. As to quaternary structure, composed of six subunits; NqrA, NqrB, NqrC, NqrD, NqrE and NqrF. It depends on [2Fe-2S] cluster as a cofactor. FAD serves as cofactor.

The protein resides in the cell inner membrane. It catalyses the reaction a ubiquinone + n Na(+)(in) + NADH + H(+) = a ubiquinol + n Na(+)(out) + NAD(+). Functionally, NQR complex catalyzes the reduction of ubiquinone-1 to ubiquinol by two successive reactions, coupled with the transport of Na(+) ions from the cytoplasm to the periplasm. The first step is catalyzed by NqrF, which accepts electrons from NADH and reduces ubiquinone-1 to ubisemiquinone by a one-electron transfer pathway. This is Na(+)-translocating NADH-quinone reductase subunit F from Yersinia pseudotuberculosis serotype O:1b (strain IP 31758).